The primary structure comprises 429 residues: Uracil permease (429 aa).

The Cytoplasmic segment spans residues 1–13 (MTRRAIGVSERPP). The helical transmembrane segment at 14-37 (LLQTIPLSLQHLFAMFGATVLVPV) threads the bilayer. Topologically, residues 38-41 (LFHI) are periplasmic. Residues 42 to 61 (NPATVLLFNGIGTLLYLFIC) form a helical membrane-spanning segment. At 62-64 (KGK) the chain is on the cytoplasmic side. The chain crosses the membrane as a discontinuously helical span at residues 65–81 (IPAYLGSSFAFISPVLL). Phenylalanine 73 lines the uracil pocket. At 82–89 (LLPLGYEV) the chain is on the periplasmic side. Residues 90–110 (ALGGFIMCGVLFCLVSFIVKK) traverse the membrane as a helical segment. Residues 111-122 (AGTGWLDVLFPP) are Cytoplasmic-facing. A helical transmembrane segment spans residues 123-144 (AAMGAIVAVIGLELAGVAAGMA). The Periplasmic portion of the chain corresponds to 145-155 (GLLPAEGQTPD). A helical transmembrane segment spans residues 156-171 (SKTIIISITTLAVTVL). Over 172–178 (GSVLFRG) the chain is Cytoplasmic. A helical transmembrane segment spans residues 179 to 199 (FLAIIPILIGVLVGYALSFAM). The Periplasmic portion of the chain corresponds to 200-224 (GIVDTTPIINAHWFALPTLYTPRFE). A helical transmembrane segment spans residues 225 to 248 (WFAILTILPAALVVIAEHVGHLVV). Glutamate 241 lines the uracil pocket. The Cytoplasmic portion of the chain corresponds to 249–261 (TANIVKKDLLRDP). Residues 262–281 (GLHRSMFANGLSTVISGFFG) form a helical membrane-spanning segment. The chain crosses the membrane as a discontinuously helical span at residues 282-298 (STPNTTYGENIGVMAIT). Uracil is bound by residues glycine 289 and glutamate 290. Residues 299–301 (RVY) lie on the Cytoplasmic side of the membrane. A helical membrane pass occupies residues 302–319 (STWVIGGAAIFAILLSCV). Residues 320–332 (GKLAAAIQMIPLP) are Periplasmic-facing. Residues 333–354 (VMGGVSLLLYGVIGASGIRVLI) traverse the membrane as a helical segment. Over 355-365 (ESKVDYNKAQN) the chain is Cytoplasmic. The segment at residues 366–401 (LILTSVILIIGVSGAKVNIGAAELKGMALATIVGIG) is an intramembrane region (discontinuously helical). Over 402–429 (LSLIFKLISVLRPEEVVLDAEDADITDK) the chain is Cytoplasmic.

The protein belongs to the nucleobase:cation symporter-2 (NCS2) (TC 2.A.40) family.

It is found in the cell inner membrane. It catalyses the reaction uracil(in) + H(+)(in) = uracil(out) + H(+)(out). Its function is as follows. Transport of uracil in the cell. The chain is Uracil permease (uraA) from Escherichia coli O157:H7.